Here is a 108-residue protein sequence, read N- to C-terminus: Large ribosomal subunit protein uL22 (108 aa).

It belongs to the universal ribosomal protein uL22 family. Part of the 50S ribosomal subunit.

Functionally, this protein binds specifically to 23S rRNA; its binding is stimulated by other ribosomal proteins, e.g. L4, L17, and L20. It is important during the early stages of 50S assembly. It makes multiple contacts with different domains of the 23S rRNA in the assembled 50S subunit and ribosome. Its function is as follows. The globular domain of the protein is located near the polypeptide exit tunnel on the outside of the subunit, while an extended beta-hairpin is found that lines the wall of the exit tunnel in the center of the 70S ribosome. The sequence is that of Large ribosomal subunit protein uL22 from Desulfatibacillum aliphaticivorans.